The following is a 116-amino-acid chain: Iron-sulfur cluster insertion protein ErpA (116 aa).

Iron-sulfur cluster contacts are provided by Cys-44, Cys-108, and Cys-110.

The protein belongs to the HesB/IscA family. As to quaternary structure, homodimer. Requires iron-sulfur cluster as cofactor.

In terms of biological role, required for insertion of 4Fe-4S clusters for at least IspG. The sequence is that of Iron-sulfur cluster insertion protein ErpA from Nitrosococcus oceani (strain ATCC 19707 / BCRC 17464 / JCM 30415 / NCIMB 11848 / C-107).